We begin with the raw amino-acid sequence, 212 residues long: Glutathione S-transferase hmp2 (212 aa).

Residues Met1–Thr80 enclose the GST N-terminal domain. Residues Lys51–Val52 and Glu64–Ser65 each bind glutathione. Positions Asp88–Arg212 constitute a GST C-terminal domain.

This sequence belongs to the GST superfamily.

It carries out the reaction RX + glutathione = an S-substituted glutathione + a halide anion + H(+). Its pathway is secondary metabolite biosynthesis. Functionally, glutathione S-transferase; part of the gene cluster that mediates the biosynthesis of hypothemycin, a resorcylic acid lactone (RAL) that irreversibly inhibits a subset of protein kinases with a conserved cysteine in the ATP binding site such as human ERK2. The first step is performed by both PKSs hmp3 and hmp8 and leads to the production of 7',8'-dehydrozearalenol (DHZ). The highly reducing PKS hpm8 synthesizes the reduced hexaketide (7S,11S,2E,8E)-7,11-dihydroxy-dodeca-2,8-dienoate, which is transferred downstream to the non-reducing PKS hpm3. Hpm3 then extends the reduced hexaketide to a nonaketide, after which regioselective cyclization and macrolactonization affords DHZ. The next step is the conversion of DHZ into aigialomycin C and is performed by the O-methyltransferase hmp5, the FAD-binding monooxygenase hmp7, and the cytochrome P450 monooxygenase hmp1. The wide substrate tolerance of the hmp5 and hmp7 implies that the reactions from DHZ to aigialomycin C can occur in any order. The steps from aigialomycin C to hypothemycin are less well established. The FAD-linked oxidoreductase hmp9 presumably catalyzes oxidation of the C-6' hydroxyl to a ketone. The timing of this oxidation is important, since the resulting enone functional group is a Michael acceptor that can react spontaneously with glutathione, an abundant metabolite in fungal cells. The glutathione S-transferase hmp2 catalyzes cis-trans isomerization of the 7',8' double bond with equilibrium favoring the trans isomer. The hpm6-encoded transporter might preferentially pump hypothemycin out of the cell relative to the trans isomer aigialomycin A. The cis-to-trans isomerization may be coupled with C-4' hydroxylation, since all known hypothemycin analogs containing the enone functional group also have hydroxyl groups at both C-4' and C-5'. The sequence is that of Glutathione S-transferase hmp2 from Hypomyces subiculosus (Nectria subiculosa).